A 62-amino-acid chain; its full sequence is Large ribosomal subunit protein bL35 (62 aa).

A compositionally biased stretch (basic residues) spans 1-26; the sequence is MPKMKTKSGLKKRIKITATGKVKRGN. Residues 1–62 form a disordered region; sequence MPKMKTKSGL…SDFKRYKELI (62 aa). Residues 53-62 show a composition bias toward basic and acidic residues; the sequence is SDFKRYKELI.

Belongs to the bacterial ribosomal protein bL35 family.

This is Large ribosomal subunit protein bL35 from Metamycoplasma arthritidis (strain 158L3-1) (Mycoplasma arthritidis).